Consider the following 392-residue polypeptide: Glutamine synthetase (392 aa).

The region spanning 26-106 is the GS beta-grasp domain; the sequence is VQVTYVWIDG…VMCEVLKYNR (81 aa). The GS catalytic domain occupies 113 to 392; that stretch reads LRHTCKKIME…MASPRDAAVF (280 aa). Glu-134 is an ATP binding site. Mn(2+) is bound by residues Glu-134, Glu-136, Glu-196, and Glu-203. Position 203–208 (203–208) interacts with ATP; it reads EFQVGP. Residue 246–247 coordinates L-glutamate; sequence NW. Residue His-253 participates in Mn(2+) binding. Residues 255-257, Arg-319, and Arg-324 contribute to the ATP site; that span reads NYS. An L-glutamate-binding site is contributed by Arg-319. Position 336–338 (336–338) interacts with ADP; it reads YFE. Residue Glu-338 participates in Mn(2+) binding. Arg-340 is an L-glutamate binding site.

The protein belongs to the glutamine synthetase family. Requires Mg(2+) as cofactor. The cofactor is Mn(2+).

The protein localises to the cytoplasm. It localises to the cytosol. The protein resides in the microsome. Its subcellular location is the mitochondrion. The enzyme catalyses L-glutamate + NH4(+) + ATP = L-glutamine + ADP + phosphate + H(+). Glutamine synthetase that catalyzes the ATP-dependent conversion of glutamate and ammonia to glutamine. The polypeptide is Glutamine synthetase (Xenopus laevis (African clawed frog)).